Here is a 262-residue protein sequence, read N- to C-terminus: ATP synthase subunit delta (262 aa).

It belongs to the ATPase delta chain family. F-type ATPases have 2 components, F(1) - the catalytic core - and F(0) - the membrane proton channel. F(1) has five subunits: alpha(3), beta(3), gamma(1), delta(1), epsilon(1). F(0) has three main subunits: a(1), b(2) and c(10-14). The alpha and beta chains form an alternating ring which encloses part of the gamma chain. F(1) is attached to F(0) by a central stalk formed by the gamma and epsilon chains, while a peripheral stalk is formed by the delta and b chains.

Its subcellular location is the cell membrane. F(1)F(0) ATP synthase produces ATP from ADP in the presence of a proton or sodium gradient. F-type ATPases consist of two structural domains, F(1) containing the extramembraneous catalytic core and F(0) containing the membrane proton channel, linked together by a central stalk and a peripheral stalk. During catalysis, ATP synthesis in the catalytic domain of F(1) is coupled via a rotary mechanism of the central stalk subunits to proton translocation. Functionally, this protein is part of the stalk that links CF(0) to CF(1). It either transmits conformational changes from CF(0) to CF(1) or is implicated in proton conduction. The sequence is that of ATP synthase subunit delta from Tropheryma whipplei (strain TW08/27) (Whipple's bacillus).